Consider the following 68-residue polypeptide: uncharacterized protein (68 aa).

This is an uncharacterized protein from Homo sapiens (Human).